The chain runs to 63 residues: Large ribosomal subunit protein bL28 (63 aa).

Belongs to the bacterial ribosomal protein bL28 family.

The polypeptide is Large ribosomal subunit protein bL28 (Acidobacterium capsulatum (strain ATCC 51196 / DSM 11244 / BCRC 80197 / JCM 7670 / NBRC 15755 / NCIMB 13165 / 161)).